The following is a 425-amino-acid chain: Histidine--tRNA ligase (425 aa).

It belongs to the class-II aminoacyl-tRNA synthetase family. As to quaternary structure, homodimer.

Its subcellular location is the cytoplasm. The enzyme catalyses tRNA(His) + L-histidine + ATP = L-histidyl-tRNA(His) + AMP + diphosphate + H(+). This Histophilus somni (strain 129Pt) (Haemophilus somnus) protein is Histidine--tRNA ligase.